Reading from the N-terminus, the 122-residue chain is Large ribosomal subunit protein uL14c (122 aa).

The protein belongs to the universal ribosomal protein uL14 family. As to quaternary structure, part of the 50S ribosomal subunit.

Its subcellular location is the plastid. It is found in the chloroplast. In terms of biological role, binds to 23S rRNA. This Lactuca sativa (Garden lettuce) protein is Large ribosomal subunit protein uL14c.